Consider the following 158-residue polypeptide: MFRIGQGFDVHQLTEGRPLIIGGIEIPYEKGLLGHSDADVLLHTVADACLGAAGEGDIGKHFPDTDPEFKDADSFKLLQHVWNIVKEKGYVLGNIDCTIIAQKPKMAPHIDAMRKRIAEGLEADVSQVNVKATTTEKLGFTGRAEGIAAQATVLIQKA.

A divalent metal cation is bound by residues D9 and H11. Residues 9 to 11 (DVH) and 35 to 36 (HS) each bind 4-CDP-2-C-methyl-D-erythritol 2-phosphate. Residue H43 coordinates a divalent metal cation. Residues 57 to 59 (DIG), 62 to 66 (FPDTD), 101 to 107 (AQKPKMA), 133 to 136 (TTTE), F140, and R143 each bind 4-CDP-2-C-methyl-D-erythritol 2-phosphate.

This sequence belongs to the IspF family. As to quaternary structure, homotrimer. Requires a divalent metal cation as cofactor.

It carries out the reaction 4-CDP-2-C-methyl-D-erythritol 2-phosphate = 2-C-methyl-D-erythritol 2,4-cyclic diphosphate + CMP. The protein operates within isoprenoid biosynthesis; isopentenyl diphosphate biosynthesis via DXP pathway; isopentenyl diphosphate from 1-deoxy-D-xylulose 5-phosphate: step 4/6. Functionally, involved in the biosynthesis of isopentenyl diphosphate (IPP) and dimethylallyl diphosphate (DMAPP), two major building blocks of isoprenoid compounds. Catalyzes the conversion of 4-diphosphocytidyl-2-C-methyl-D-erythritol 2-phosphate (CDP-ME2P) to 2-C-methyl-D-erythritol 2,4-cyclodiphosphate (ME-CPP) with a corresponding release of cytidine 5-monophosphate (CMP). This Bacillus velezensis (strain DSM 23117 / BGSC 10A6 / LMG 26770 / FZB42) (Bacillus amyloliquefaciens subsp. plantarum) protein is 2-C-methyl-D-erythritol 2,4-cyclodiphosphate synthase.